Reading from the N-terminus, the 149-residue chain is Transthyretin (149 aa).

A signal peptide spans 1-20 (MAFHSLLLLCLAGLAFVSET). Position 32 is a sulfocysteine (cysteine 32). Lysine 37 contacts L-thyroxine. The residue at position 64 (glutamate 64) is a 4-carboxyglutamate. L-thyroxine is bound by residues glutamate 76 and serine 139.

It belongs to the transthyretin family. As to quaternary structure, homotetramer. Dimer of dimers. In the homotetramer, subunits assemble around a central channel that can accommodate two ligand molecules. Interacts with RBP4. Post-translationally, sulfonation of the reactive cysteine Cys-32 enhances the stability of the native conformation of TTR, avoiding misassembly of the protein leading to amyloid formation.

The protein localises to the secreted. Functionally, thyroid hormone-binding protein. Probably transports thyroxine from the bloodstream to the brain. The protein is Transthyretin (TTR) of Notamacropus eugenii (Tammar wallaby).